The following is a 767-amino-acid chain: Cilia- and flagella-associated protein 91 (767 aa).

The interval 1–29 is disordered; the sequence is MSHAVTIEEPQAQPQVSQTRYRERSRAGS.

The protein belongs to the CFAP91 family. Interacts with MYCBP and AKAP1. Part of a complex containing MYCBP, AKAP1 and PRKAR2B. Interacts with CFAP61. In terms of assembly, does not interact with MYCBP. Phosphorylated by PKA. As to expression, strongly expressed in the liver. Widely expressed, but strongly expressed in all spermatogenesis-related tissues, including the testis, the epithelium of cauda and the corpus epididymis, as well as the spermatid and mature sperm. Also expressed in Leydig cells.

It localises to the mitochondrion. Its subcellular location is the cytoplasm. The protein resides in the cytoskeleton. The protein localises to the cilium axoneme. Its function is as follows. Involved in sperm flagellum axonemal organization and function. May regulate cilium motility through its role in the assembly of the axonemal radial spokes. This is Cilia- and flagella-associated protein 91 from Homo sapiens (Human).